The sequence spans 378 residues: Chaperone protein DnaJ (378 aa).

Residues 5–70 (DFYEILGVSK…EKRSAYDRMG (66 aa)) form the J domain. The CR-type zinc finger occupies 137-215 (GCKKEISFTA…CHGNGVKDKS (79 aa)). Positions 150, 153, 167, 170, 189, 192, 203, and 206 each coordinate Zn(2+). CXXCXGXG motif repeat units lie at residues 150-157 (CDTCDGKG), 167-174 (CQTCHGQG), 189-196 (CPHCGGTG), and 203-210 (CSDCHGNG).

Belongs to the DnaJ family. In terms of assembly, homodimer. Requires Zn(2+) as cofactor.

The protein localises to the cytoplasm. In terms of biological role, participates actively in the response to hyperosmotic and heat shock by preventing the aggregation of stress-denatured proteins and by disaggregating proteins, also in an autonomous, DnaK-independent fashion. Unfolded proteins bind initially to DnaJ; upon interaction with the DnaJ-bound protein, DnaK hydrolyzes its bound ATP, resulting in the formation of a stable complex. GrpE releases ADP from DnaK; ATP binding to DnaK triggers the release of the substrate protein, thus completing the reaction cycle. Several rounds of ATP-dependent interactions between DnaJ, DnaK and GrpE are required for fully efficient folding. Also involved, together with DnaK and GrpE, in the DNA replication of plasmids through activation of initiation proteins. In Psychrobacter cryohalolentis (strain ATCC BAA-1226 / DSM 17306 / VKM B-2378 / K5), this protein is Chaperone protein DnaJ.